The chain runs to 1378 residues: DNA-directed RNA polymerase subunit beta (1378 aa).

It belongs to the RNA polymerase beta chain family. As to quaternary structure, the RNAP catalytic core consists of 2 alpha, 1 beta, 1 beta' and 1 omega subunit. When a sigma factor is associated with the core the holoenzyme is formed, which can initiate transcription.

The enzyme catalyses RNA(n) + a ribonucleoside 5'-triphosphate = RNA(n+1) + diphosphate. Its function is as follows. DNA-dependent RNA polymerase catalyzes the transcription of DNA into RNA using the four ribonucleoside triphosphates as substrates. In Roseobacter denitrificans (strain ATCC 33942 / OCh 114) (Erythrobacter sp. (strain OCh 114)), this protein is DNA-directed RNA polymerase subunit beta.